The chain runs to 490 residues: 23S rRNA (uracil(1939)-C(5))-methyltransferase RlmD (490 aa).

The region spanning 14–75 (APAPAEYPID…SSFEKATLTA (62 aa)) is the TRAM domain. [4Fe-4S] cluster-binding residues include C88, C98, C101, and C180. S-adenosyl-L-methionine-binding residues include Q289, F318, N323, E339, N374, and D395. Residue C446 is the Nucleophile of the active site.

This sequence belongs to the class I-like SAM-binding methyltransferase superfamily. RNA M5U methyltransferase family. RlmD subfamily.

It catalyses the reaction uridine(1939) in 23S rRNA + S-adenosyl-L-methionine = 5-methyluridine(1939) in 23S rRNA + S-adenosyl-L-homocysteine + H(+). In terms of biological role, catalyzes the formation of 5-methyl-uridine at position 1939 (m5U1939) in 23S rRNA. This chain is 23S rRNA (uracil(1939)-C(5))-methyltransferase RlmD, found in Polaromonas naphthalenivorans (strain CJ2).